We begin with the raw amino-acid sequence, 417 residues long: NADH-quinone oxidoreductase subunit D (417 aa).

It belongs to the complex I 49 kDa subunit family. NDH-1 is composed of 14 different subunits. Subunits NuoB, C, D, E, F, and G constitute the peripheral sector of the complex.

The protein resides in the cell inner membrane. It carries out the reaction a quinone + NADH + 5 H(+)(in) = a quinol + NAD(+) + 4 H(+)(out). In terms of biological role, NDH-1 shuttles electrons from NADH, via FMN and iron-sulfur (Fe-S) centers, to quinones in the respiratory chain. The immediate electron acceptor for the enzyme in this species is believed to be ubiquinone. Couples the redox reaction to proton translocation (for every two electrons transferred, four hydrogen ions are translocated across the cytoplasmic membrane), and thus conserves the redox energy in a proton gradient. The sequence is that of NADH-quinone oxidoreductase subunit D from Polynucleobacter necessarius subsp. necessarius (strain STIR1).